Here is a 97-residue protein sequence, read N- to C-terminus: UstYa family oxidase VicYc (97 aa).

2 short sequence motifs (HXXHC) span residues 11 to 15 (HELHC) and 38 to 42 (HANHC).

Belongs to the ustYa family.

It participates in mycotoxin biosynthesis. Functionally, ustYa family oxidase, part of the gene cluster that mediates the biosynthesis of the secondary metabolite victorin, the molecular basis for Victoria blight of oats. The role of vicYc within the pathway has still to be determined. The pathway starts with the processing of the precursor vicA1 by several endopeptidases including kexin proteases as well as the cluster-specific S28 family peptidases vicPa and vicPb to produce 7 identical copies of the hexapeptide Gly-Leu-Lys-Leu-Ala-Phe. After being excised from the precursor peptide, the core peptides are cyclized and modified post-translationally by enzymes encoded within the gene cluster. The ustYa family oxidase vicYb is required for the formation of the macrocycle in victorin and the copper amine oxidases (CAOs) vicK1 and vicK2 are responsible for converting victorin to the active form by oxidizing the N-terminal glycyl residue in the peptides to glyoxylate. Relaxed substrate specificity of enzymes in the victorin biosynthetic pathway results in a metabolic grid that produces a set of analogs including victorinines B, C, E or HV-toxin M. This Bipolaris victoriae (strain FI3) (Victoria blight of oats agent) protein is UstYa family oxidase VicYc.